The following is a 211-amino-acid chain: MTKPLTIAVPKGRILKDLIPLVRRAGLDSTPLEENDRRLVRPTADGAFRYVFLKPDDVPTYVEYGAADLGVSGRDTLLERRHDLYTPLDLGIGRCRLVVAGPEDTEVPDLPRVATKYPRIAGDHFASKGVVAEIIPVHGSVELAPLVGLSHLIVDIVETGSTLRENRLEVLETVTEVSTQLIANRASYKLRSDVIRPLVERLRAATAGAGR.

It belongs to the ATP phosphoribosyltransferase family. Short subfamily. Heteromultimer composed of HisG and HisZ subunits.

Its subcellular location is the cytoplasm. The catalysed reaction is 1-(5-phospho-beta-D-ribosyl)-ATP + diphosphate = 5-phospho-alpha-D-ribose 1-diphosphate + ATP. It participates in amino-acid biosynthesis; L-histidine biosynthesis; L-histidine from 5-phospho-alpha-D-ribose 1-diphosphate: step 1/9. Its function is as follows. Catalyzes the condensation of ATP and 5-phosphoribose 1-diphosphate to form N'-(5'-phosphoribosyl)-ATP (PR-ATP). Has a crucial role in the pathway because the rate of histidine biosynthesis seems to be controlled primarily by regulation of HisG enzymatic activity. In Sorangium cellulosum (strain So ce56) (Polyangium cellulosum (strain So ce56)), this protein is ATP phosphoribosyltransferase.